The following is a 288-amino-acid chain: Long chain fatty acid elongase 1 (288 aa).

The next 7 membrane-spanning stretches (helical) occupy residues 39–59 (FFAD…VVVF), 73–93 (LTIP…AGAV), 126–146 (WVWL…FLVL), 150–170 (PLMF…WYSH), 180–197 (GIYL…YYFL), 217–237 (IVQF…MHFT), and 247–267 (VFKL…NFFL).

The protein belongs to the ELO family.

Its subcellular location is the membrane. The catalysed reaction is (6Z,9Z,12Z)-octadecatrienoyl-CoA + malonyl-CoA + H(+) = (8Z,11Z,14Z)-3-oxoeicosatrienoyl-CoA + CO2 + CoA. The enzyme catalyses (6Z,9Z,12Z,15Z)-octadecatetraenoyl-CoA + malonyl-CoA + H(+) = (8Z,11Z,14Z,17Z)-3-oxoicosatetraenoyl-CoA + CO2 + CoA. It carries out the reaction (9Z)-hexadecenoyl-CoA + malonyl-CoA + H(+) = 3-oxo-(11Z)-octadecenoyl-CoA + CO2 + CoA. It functions in the pathway lipid metabolism; fatty acid biosynthesis. Catalyzes the first and rate-limiting reaction of the four reactions that constitute the long-chain fatty acids elongation cycle. Uses malonyl-CoA to add 2 carbons per cycle to the chain of long-chain fatty acids. Condensing enzyme that catalyzes the elongation of monounsaturated (MUFA) and polyunsaturated (PUFA) fatty acids that are involved in multiple biological processes as precursors of membrane lipids and lipid mediators. This is Long chain fatty acid elongase 1 from Caenorhabditis elegans.